Here is a 338-residue protein sequence, read N- to C-terminus: 1-aminocyclopropane-1-carboxylate deaminase (338 aa).

Lysine 51 carries the post-translational modification N6-(pyridoxal phosphate)lysine. Catalysis depends on serine 78, which acts as the Nucleophile.

It belongs to the ACC deaminase/D-cysteine desulfhydrase family. As to quaternary structure, homotrimer. Requires pyridoxal 5'-phosphate as cofactor.

It catalyses the reaction 1-aminocyclopropane-1-carboxylate + H2O = 2-oxobutanoate + NH4(+). Its function is as follows. Catalyzes a cyclopropane ring-opening reaction, the irreversible conversion of 1-aminocyclopropane-1-carboxylate (ACC) to ammonia and alpha-ketobutyrate. Allows growth on ACC as a nitrogen source. The chain is 1-aminocyclopropane-1-carboxylate deaminase from Burkholderia thailandensis (strain ATCC 700388 / DSM 13276 / CCUG 48851 / CIP 106301 / E264).